The following is a 437-amino-acid chain: Eukaryotic peptide chain release factor subunit 1 (437 aa).

The NIKS motif; plays an important role in translational termination signature appears at 61–64; the sequence is NIKS.

The protein belongs to the eukaryotic release factor 1 family. As to quaternary structure, component of the eRF1-eRF3-GTP ternary complex, composed of ETF1/ERF1 and eRF3 (GSPT1/ERF3A or GSPT2/ERF3B) and GTP.

It is found in the cytoplasm. In terms of biological role, component of the eRF1-eRF3-GTP ternary complex, a ternary complex that mediates translation termination in response to the termination codons. The eRF1-eRF3-GTP complex binds to a stop codon in the ribosomal A-site. ETF1/ERF1 is responsible for stop codon recognition and inducing hydrolysis of peptidyl-tRNA. Following GTP hydrolysis, eRF3 (GSPT1/ERF3A or GSPT2/ERF3B) dissociates, permitting ETF1/eRF1 to accommodate fully in the A-site, followed by hydrolysis of peptidyl-tRNA. This chain is Eukaryotic peptide chain release factor subunit 1 (etf1), found in Xenopus laevis (African clawed frog).